The chain runs to 505 residues: Holliday junction branch migration ATPase PINA (505 aa).

One can recognise a PINc domain in the interval 2-106; the sequence is NDLMLDKSAL…IVTADETQKK (105 aa). The KH domain stretch occupies residues 434-505; it reads PVNRGITMSN…NIKIKIKLSD (72 aa). Residues 493–505 form a required for maximum interaction with Hjc and Hjm region; the sequence is KKNNIKIKIKLSD.

In terms of assembly, homohexamer; the central pore (25-31 Angstroms) is large enough to hold dsDNA. In PDB:5F4H two of the 6 subunits are in an ATP-binding competent conformation. Interacts with Holliday junction resolvase Hjc; in the presence of HJ DNA this interaction decreases branch migration but not Y-DNA unwinding. Interacts with helicase Hjm (hel308) which decreases the DNA helicase activity of Hjm. Ca(2+) serves as cofactor.

It catalyses the reaction ATP + H2O = ADP + phosphate + H(+). Its function is as follows. Promotes Holliday junction (HJ) branch migration and unwinds Y-shaped DNA (but not replication forks or dsDNA) in an ATP hydrolysis-dependent manner. Stimulates cleavage by HJ resolvase Hjc. Unwinds Y-shaped and 3'-flap DNA substrates. In the absence of other proteins stabilizes replication forks (prevents spontaneous unwinding); Hjc, Hjm (Hel308) and PINA coordinate HJ migration and cleavage of replication forks in a coordinated way. Inhibits the 5'-3' (but not 3'-5') helicase activity of helicase Hjm (Hel308) on overhang DNA. Probably acts as an ATP-dependent pump that pulls DNA through the hexamer. The polypeptide is Holliday junction branch migration ATPase PINA (Saccharolobus islandicus (strain REY15A) (Sulfolobus islandicus)).